The following is a 358-amino-acid chain: UDP-N-acetylglucosamine--N-acetylmuramyl-(pentapeptide) pyrophosphoryl-undecaprenol N-acetylglucosamine transferase (358 aa).

Residues 11-13 (TGG), R163, S191, I245, and Q290 each bind UDP-N-acetyl-alpha-D-glucosamine.

It belongs to the glycosyltransferase 28 family. MurG subfamily.

It localises to the cell inner membrane. The catalysed reaction is di-trans,octa-cis-undecaprenyl diphospho-N-acetyl-alpha-D-muramoyl-L-alanyl-D-glutamyl-meso-2,6-diaminopimeloyl-D-alanyl-D-alanine + UDP-N-acetyl-alpha-D-glucosamine = di-trans,octa-cis-undecaprenyl diphospho-[N-acetyl-alpha-D-glucosaminyl-(1-&gt;4)]-N-acetyl-alpha-D-muramoyl-L-alanyl-D-glutamyl-meso-2,6-diaminopimeloyl-D-alanyl-D-alanine + UDP + H(+). It functions in the pathway cell wall biogenesis; peptidoglycan biosynthesis. In terms of biological role, cell wall formation. Catalyzes the transfer of a GlcNAc subunit on undecaprenyl-pyrophosphoryl-MurNAc-pentapeptide (lipid intermediate I) to form undecaprenyl-pyrophosphoryl-MurNAc-(pentapeptide)GlcNAc (lipid intermediate II). This Herminiimonas arsenicoxydans protein is UDP-N-acetylglucosamine--N-acetylmuramyl-(pentapeptide) pyrophosphoryl-undecaprenol N-acetylglucosamine transferase.